We begin with the raw amino-acid sequence, 455 residues long: Probable 1,4-beta-D-glucan cellobiohydrolase A (455 aa).

A signal peptide spans 1–17 (MHQRALLFSAFWTAVQA). N-linked (GlcNAc...) asparagine glycosylation is present at N81. The active-site Nucleophile is E227. Residue E232 is the Proton donor of the active site. N-linked (GlcNAc...) asparagine glycosylation is present at N285.

The protein belongs to the glycosyl hydrolase 7 (cellulase C) family.

The protein localises to the secreted. It catalyses the reaction Hydrolysis of (1-&gt;4)-beta-D-glucosidic linkages in cellulose and cellotetraose, releasing cellobiose from the non-reducing ends of the chains.. Its function is as follows. The biological conversion of cellulose to glucose generally requires three types of hydrolytic enzymes: (1) Endoglucanases which cut internal beta-1,4-glucosidic bonds; (2) Exocellobiohydrolases that cut the disaccharide cellobiose from the non-reducing end of the cellulose polymer chain; (3) Beta-1,4-glucosidases which hydrolyze the cellobiose and other short cello-oligosaccharides to glucose. This chain is Probable 1,4-beta-D-glucan cellobiohydrolase A (cbhA), found in Aspergillus flavus (strain ATCC 200026 / FGSC A1120 / IAM 13836 / NRRL 3357 / JCM 12722 / SRRC 167).